The following is a 235-amino-acid chain: N,O-diacetylmuramidase (235 aa).

Positions 1–17 are cleaved as a signal peptide; it reads MKLSLLTVAAAAGAAVA. The Ch-type lysozyme domain occupies 29–235; that stretch reads SVQGFDISGY…DQLQRFAKGG (207 aa). Residues Asp34, Asp122, and Glu124 contribute to the active site. Cys132 and Cys171 are disulfide-bonded.

Belongs to the glycosyl hydrolase 25 family.

Its subcellular location is the secreted. It catalyses the reaction Hydrolysis of (1-&gt;4)-beta-linkages between N-acetylmuramic acid and N-acetyl-D-glucosamine residues in a peptidoglycan and between N-acetyl-D-glucosamine residues in chitodextrins.. In terms of biological role, this enzyme has both lysozyme (acetylmuramidase) and diacetylmuramidase activities. This Arthroderma benhamiae (strain ATCC MYA-4681 / CBS 112371) (Trichophyton mentagrophytes) protein is N,O-diacetylmuramidase.